A 333-amino-acid chain; its full sequence is Electron transfer flavoprotein subunit alpha, mitochondrial (333 aa).

A mitochondrion-targeting transit peptide spans 1–19 (MFRAAAPGQLRRAASLLRF). Residues 20–204 (QSTLVIAEHA…GISEWLDQKL (185 aa)) form a domain I region. At lysine 59 the chain carries N6-acetyllysine; alternate. Lysine 59 bears the N6-succinyllysine; alternate mark. Lysine 62 carries the post-translational modification N6-acetyllysine. Lysine 69 carries the post-translational modification N6-acetyllysine; alternate. Lysine 69 carries the N6-succinyllysine; alternate modification. Position 75 is an N6-acetyllysine (lysine 75). Position 85 is an N6-acetyllysine; alternate (lysine 85). Lysine 85 bears the N6-succinyllysine; alternate mark. Threonine 93 bears the Phosphothreonine mark. Residues lysine 101 and lysine 139 each carry the N6-acetyllysine modification. Phosphoserine is present on serine 140. The residue at position 158 (lysine 158) is an N6-acetyllysine; alternate. At lysine 158 the chain carries N6-succinyllysine; alternate. Position 164 is an N6-acetyllysine (lysine 164). Residue lysine 187 is modified to N6-succinyllysine. The residue at position 203 (lysine 203) is an N6-acetyllysine; alternate. At lysine 203 the chain carries N6-succinyllysine; alternate. Residues 205 to 333 (TKSDRPELTG…PEMTEILKKK (129 aa)) are domain II. Lysine 216 bears the N6-succinyllysine mark. FAD is bound at residue arginine 223. N6-acetyllysine; alternate occurs at positions 226 and 232. N6-succinyllysine; alternate is present on residues lysine 226 and lysine 232. FAD is bound by residues serine 248, 263–266 (VGQT), 281–286 (SGAIQH), and asparagine 300. Lysine 301 is modified (N6-succinyllysine). 318 to 319 (DL) is an FAD binding site.

It belongs to the ETF alpha-subunit/FixB family. As to quaternary structure, heterodimer composed of ETFA and ETFB. Identified in a complex that contains ETFA, ETFB and ETFRF1. Interaction with ETFRF1 promotes dissociation of the bound FAD and loss of electron transfer activity. Interacts with TASOR. Requires FAD as cofactor. In terms of tissue distribution, expressed in the spermatogonia, spermatocytes, ovary and granular cells within the cerebellum.

The protein localises to the mitochondrion matrix. Functionally, heterodimeric electron transfer flavoprotein that accepts electrons from several mitochondrial dehydrogenases, including acyl-CoA dehydrogenases, glutaryl-CoA and sarcosine dehydrogenase. It transfers the electrons to the main mitochondrial respiratory chain via ETF-ubiquinone oxidoreductase (ETF dehydrogenase). Required for normal mitochondrial fatty acid oxidation and normal amino acid metabolism. The sequence is that of Electron transfer flavoprotein subunit alpha, mitochondrial (Etfa) from Mus musculus (Mouse).